A 398-amino-acid polypeptide reads, in one-letter code: L-methionine gamma-lyase (398 aa).

Pyridoxal 5'-phosphate-binding positions include 59–61 and 89–90; these read YSR and GM. Y114 lines the substrate pocket. 208 to 210 provides a ligand contact to pyridoxal 5'-phosphate; the sequence is SAT. At K211 the chain carries N6-(pyridoxal phosphate)lysine. R375 is a binding site for substrate.

The protein belongs to the trans-sulfuration enzymes family. L-methionine gamma-lyase subfamily. As to quaternary structure, homotetramer; dimer of active dimers. It depends on pyridoxal 5'-phosphate as a cofactor.

The catalysed reaction is L-methionine + H2O = methanethiol + 2-oxobutanoate + NH4(+). It catalyses the reaction L-homocysteine + H2O = 2-oxobutanoate + hydrogen sulfide + NH4(+) + H(+). Its activity is regulated as follows. Irreversibly inactivated by DL-propargylglycine. Catalyzes the alpha,gamma-elimination of L-methionine to produce methanethiol, 2-oxobutanoate and ammonia. Is involved in L-methionine catabolism. In fact, shows a multicatalytic function since it also catalyzes gamma-replacement of L-methionine with thiol compounds, alpha,gamma-elimination and gamma-replacement reactions of L-homocysteine and its S-substituted derivatives, O-substituted-L-homoserines and DL-selenomethionine, and, to a lesser extent, alpha,beta-elimination and beta-replacement reactions of L-cysteine, S-methyl-L-cysteine, and O-acetyl-L-serine. Also catalyzes deamination and gamma-addition reactions of L-vinylglycine. Thus, the enzyme is able to cleave C-S, C-Se, and C-O bonds of sulfur, selenium, and oxygen amino acids, respectively. This chain is L-methionine gamma-lyase, found in Pseudomonas putida (Arthrobacter siderocapsulatus).